The following is a 229-amino-acid chain: Germin-like protein 3-6 (229 aa).

The signal sequence occupies residues 1-31 (MEHSFKTIAAGVVIVVLLLQQAPVLIRATDA). A disulfide bridge connects residues Cys38 and Cys53. The region spanning 67–219 (SKIATGGDVN…ALRVDAGVVE (153 aa)) is the Cupin type-1 domain. N-linked (GlcNAc...) asparagine glycans are attached at residues Asn80 and Asn83. Mn(2+) is bound by residues His116, His118, Glu123, and His165.

This sequence belongs to the germin family. Oligomer (believed to be a pentamer but probably hexamer).

The protein resides in the secreted. The protein localises to the extracellular space. It is found in the apoplast. In terms of biological role, may play a role in plant defense. Probably has no oxalate oxidase activity even if the active site is conserved. This Oryza sativa subsp. japonica (Rice) protein is Germin-like protein 3-6.